We begin with the raw amino-acid sequence, 570 residues long: Periplasmic trehalase (570 aa).

The N-terminal stretch at 1 to 34 is a signal peptide; that stretch reads MIPPEIRRSVLLQKAIKLALAGTLLTFASFSATA. Residues Arg-159, 166–167, Asn-203, 212–214, 284–286, and Gly-317 contribute to the substrate site; these read WD, RSQ, and RPE. Catalysis depends on proton donor/acceptor residues Asp-319 and Glu-503. Residue Glu-518 coordinates substrate. Residues 545–570 are disordered; that stretch reads PCDSVPSTRPASLSATPTKTPSAATQ. Residues 554–570 are compositionally biased toward low complexity; it reads PASLSATPTKTPSAATQ.

This sequence belongs to the glycosyl hydrolase 37 family. In terms of assembly, monomer.

It is found in the periplasm. It catalyses the reaction alpha,alpha-trehalose + H2O = alpha-D-glucose + beta-D-glucose. Its function is as follows. Provides the cells with the ability to utilize trehalose at high osmolarity by splitting it into glucose molecules that can subsequently be taken up by the phosphotransferase-mediated uptake system. In Salmonella agona (strain SL483), this protein is Periplasmic trehalase.